We begin with the raw amino-acid sequence, 326 residues long: Aspartate carbamoyltransferase catalytic subunit (326 aa).

The carbamoyl phosphate site is built by R55 and T56. K83 lines the L-aspartate pocket. The carbamoyl phosphate site is built by R105, H135, and Q138. L-aspartate-binding residues include R176 and R230. Carbamoyl phosphate is bound by residues G271 and P272.

The protein belongs to the aspartate/ornithine carbamoyltransferase superfamily. ATCase family. Heterododecamer (2C3:3R2) of six catalytic PyrB chains organized as two trimers (C3), and six regulatory PyrI chains organized as three dimers (R2).

The enzyme catalyses carbamoyl phosphate + L-aspartate = N-carbamoyl-L-aspartate + phosphate + H(+). It participates in pyrimidine metabolism; UMP biosynthesis via de novo pathway; (S)-dihydroorotate from bicarbonate: step 2/3. Its function is as follows. Catalyzes the condensation of carbamoyl phosphate and aspartate to form carbamoyl aspartate and inorganic phosphate, the committed step in the de novo pyrimidine nucleotide biosynthesis pathway. The chain is Aspartate carbamoyltransferase catalytic subunit from Streptomyces coelicolor (strain ATCC BAA-471 / A3(2) / M145).